A 138-amino-acid chain; its full sequence is Ribulose bisphosphate carboxylase small subunit (138 aa).

Belongs to the RuBisCO small chain family. In terms of assembly, heterohexadecamer of 8 large and 8 small subunits.

The protein resides in the plastid. It localises to the chloroplast. Its function is as follows. RuBisCO catalyzes two reactions: the carboxylation of D-ribulose 1,5-bisphosphate, the primary event in carbon dioxide fixation, as well as the oxidative fragmentation of the pentose substrate in the photorespiration process. Both reactions occur simultaneously and in competition at the same active site. Although the small subunit is not catalytic it is essential for maximal activity. In Antithamnion sp. (Red alga), this protein is Ribulose bisphosphate carboxylase small subunit.